Consider the following 138-residue polypeptide: Acidic phospholipase A2 BITP01A (138 aa).

The first 16 residues, 1–16, serve as a signal peptide directing secretion; that stretch reads MRTLWIMAVLLVGVEG. Disulfide bonds link cysteine 42–cysteine 131, cysteine 44–cysteine 60, cysteine 59–cysteine 111, cysteine 65–cysteine 138, cysteine 66–cysteine 104, cysteine 73–cysteine 97, and cysteine 91–cysteine 102. Residues tyrosine 43, glycine 45, and glycine 47 each contribute to the Ca(2+) site. The active site involves histidine 63. Aspartate 64 is a Ca(2+) binding site. Aspartate 105 is a catalytic residue.

The cofactor is Ca(2+). In terms of tissue distribution, expressed by the venom gland.

It localises to the secreted. The catalysed reaction is a 1,2-diacyl-sn-glycero-3-phosphocholine + H2O = a 1-acyl-sn-glycero-3-phosphocholine + a fatty acid + H(+). Snake venom phospholipase A2 (PLA2) that induces edema in mice, produces neuromuscular blockade in chick biventer cervicis, increases CK release and produces myonecrosis. PLA2 catalyzes the calcium-dependent hydrolysis of the 2-acyl groups in 3-sn-phosphoglycerides. The sequence is that of Acidic phospholipase A2 BITP01A from Bothrops insularis (Golden lancehead).